The primary structure comprises 488 residues: Retinoic acid receptor RXR-alpha (488 aa).

Positions 1-160 (MSSAAMDTKH…GAMASFTKHI (160 aa)) are modulating. Lysine 134 participates in a covalent cross-link: Glycyl lysine isopeptide (Lys-Gly) (interchain with G-Cter in SUMO). A DNA-binding region (nuclear receptor) is located at residues 158–233 (KHICAICGDR…MGMKREAVQE (76 aa)). Zn(2+)-binding residues include cysteine 161, cysteine 164, cysteine 178, and cysteine 181. The segment at 161-181 (CAICGDRSSGKHYGVYSCEGC) adopts an NR C4-type zinc-finger fold. The nuclear localization signal stretch occupies residues 186–191 (KRTVRK). Positions 197, 203, 213, and 216 each coordinate Zn(2+). An NR C4-type zinc finger spans residues 197–216 (CRDSKDCMIDKRQRNRCQYC). The segment at 227 to 250 (KREAVQEERQRGKERNENEVESSN) is hinge. Over residues 232 to 244 (QEERQRGKERNEN) the composition is skewed to basic and acidic residues. Residues 232–256 (QEERQRGKERNENEVESSNSANEDM) are disordered. The NR LBD domain maps to 253–484 (NEDMPVEKIL…TFLMEMLEAP (232 aa)). The 9-cis-retinoate site is built by arginine 342 and alanine 353. Residues arginine 342 and alanine 353 each coordinate all-trans-retinoate. The interval 374–394 (RVLTELVSKMRDMQMDKTELG) is required for nuclear export. An AF-2 region spans residues 473–484 (IDTFLMEMLEAP).

It belongs to the nuclear hormone receptor family. NR2 subfamily. As to quaternary structure, homodimer. Heterodimer; with a rar molecule. Binds DNA preferentially as a rar/rxr heterodimer. Interacts with coactivator ncoa3 and with senp6. In terms of processing, sumoylated on Lys-134; which negatively regulates transcriptional activity. Desumoylated specifically by SENP6.

It is found in the nucleus. Functionally, receptor for retinoic acid that acts as a transcription factor. Forms homo- or heterodimers with retinoic acid receptors (rars) and binds to target response elements in response to their ligands, all-trans or 9-cis retinoic acid, to regulate gene expression in various biological processes. The rar/rxr heterodimers bind to the retinoic acid response elements (RARE) composed of tandem 5'-AGGTCA-3' sites known as DR1-DR5 to regulate transcription. The high affinity ligand for rxrs is 9-cis retinoic acid. In the absence of ligand, the rar/rxr heterodimers associate with a multiprotein complex containing transcription corepressors that induce histone deacetylation, chromatin condensation and transcriptional suppression. On ligand binding, the corepressors dissociate from the receptors and coactivators are recruited leading to transcriptional activation. The chain is Retinoic acid receptor RXR-alpha (rxra) from Xenopus laevis (African clawed frog).